The following is a 550-amino-acid chain: CTP synthase (550 aa).

Residues 1 to 277 (MNGSADAGPR…GRAVERALGL (277 aa)) are amidoligase domain. Ser-23 contributes to the CTP binding site. Ser-23 serves as a coordination point for UTP. 24–29 (SLGKGI) is a binding site for ATP. Tyr-64 contributes to the L-glutamine binding site. Asp-81 provides a ligand contact to ATP. Residues Asp-81 and Glu-151 each contribute to the Mg(2+) site. Residues 158 to 160 (DIE), 198 to 203 (KTKPTQ), and Lys-234 each bind CTP. UTP-binding positions include 198-203 (KTKPTQ) and Lys-234. A Glutamine amidotransferase type-1 domain is found at 302–549 (KIAIAGKYVK…VEAALAYQER (248 aa)). Gly-364 is an L-glutamine binding site. The Nucleophile; for glutamine hydrolysis role is filled by Cys-391. Residues 392-395 (LGLQ), Glu-415, and Arg-472 contribute to the L-glutamine site. Active-site residues include His-522 and Glu-524.

It belongs to the CTP synthase family. In terms of assembly, homotetramer.

The catalysed reaction is UTP + L-glutamine + ATP + H2O = CTP + L-glutamate + ADP + phosphate + 2 H(+). The enzyme catalyses L-glutamine + H2O = L-glutamate + NH4(+). It catalyses the reaction UTP + NH4(+) + ATP = CTP + ADP + phosphate + 2 H(+). It participates in pyrimidine metabolism; CTP biosynthesis via de novo pathway; CTP from UDP: step 2/2. Allosterically activated by GTP, when glutamine is the substrate; GTP has no effect on the reaction when ammonia is the substrate. The allosteric effector GTP functions by stabilizing the protein conformation that binds the tetrahedral intermediate(s) formed during glutamine hydrolysis. Inhibited by the product CTP, via allosteric rather than competitive inhibition. Its function is as follows. Catalyzes the ATP-dependent amination of UTP to CTP with either L-glutamine or ammonia as the source of nitrogen. Regulates intracellular CTP levels through interactions with the four ribonucleotide triphosphates. The polypeptide is CTP synthase (Thermus thermophilus (strain ATCC BAA-163 / DSM 7039 / HB27)).